A 971-amino-acid chain; its full sequence is U2 snRNP component HSH155 (971 aa).

Disordered stretches follow at residues 1–22 and 54–118; these read MSHP…LGGQ and TRTV…AVKE. Residues 8-22 are compositionally biased toward polar residues; that stretch reads VNANNSDKSHQLGGQ. Over residues 54–75 the composition is skewed to basic and acidic residues; sequence TRTVQNREDSYHKRRFDMKFEP. Residues 78-90 are compositionally biased toward polar residues; that stretch reads DTQTVTSSENTQD. HEAT repeat units lie at residues 199–237, 273–310, 350–387, 513–550, 596–633, 680–717, 722–759, 792–829, and 832–870; these read MIFN…DLTK, AGLK…ALGV, NHLT…NSYP, LGCS…LLGT, PFLA…VIKN, PPIN…LAPT, KEWM…AIGP, CGPY…YIGN, and KDYI…NCSG.

Belongs to the SF3B1 family. As to quaternary structure, belongs to the CWC complex (or CEF1-associated complex), a spliceosome sub-complex reminiscent of a late-stage spliceosome composed of the U2, U5 and U6 snRNAs and at least BUD13, BUD31, BRR2, CDC40, CEF1, CLF1, CUS1, CWC2, CWC15, CWC21, CWC22, CWC23, CWC24, CWC25, CWC27, ECM2, HSH155, IST3, ISY1, LEA1, MSL1, NTC20, PRP8, PRP9, PRP11, PRP19, PRP21, PRP22, PRP45, PRP46, SLU7, SMB1, SMD1, SMD2, SMD3, SMX2, SMX3, SNT309, SNU114, SPP2, SYF1, SYF2, RSE1 and YJU2. Interacts with RDS3.

It localises to the nucleus. Functionally, contacts pre-mRNA on both sides of the branch site early in spliceosome assembly. In Saccharomyces cerevisiae (strain ATCC 204508 / S288c) (Baker's yeast), this protein is U2 snRNP component HSH155 (HSH155).